The chain runs to 449 residues: Heterogeneous nuclear ribonucleoprotein H2 (449 aa).

Residue methionine 1 is modified to N-acetylmethionine. At methionine 2 the chain carries N-acetylmethionine; in Heterogeneous nuclear ribonucleoprotein H2, N-terminally processed. The 80-residue stretch at 11–90 (FVVKVRGLPW…RYVEVFKSNS (80 aa)) folds into the RRM 1 domain. Serine 23 is modified (phosphoserine). Lysine 35 participates in a covalent cross-link: Glycyl lysine isopeptide (Lys-Gly) (interchain with G-Cter in SUMO2). A phosphoserine mark is found at serine 54 and serine 63. Residue lysine 87 forms a Glycyl lysine isopeptide (Lys-Gly) (interchain with G-Cter in SUMO2) linkage. Position 90 is a phosphoserine (serine 90). Lysine 98 is covalently cross-linked (Glycyl lysine isopeptide (Lys-Gly) (interchain with G-Cter in SUMO2)). Residues 111–188 (GFVRLRGLPF…RYIEIFKSSR (78 aa)) form the RRM 2 domain. The residue at position 233 (arginine 233) is a Dimethylated arginine; alternate. An Omega-N-methylarginine; alternate modification is found at arginine 233. Residues 234–249 (GAYGGGYGGYDDYGGY) form a 1-1 repeat. The 2 X 16 AA Gly-rich approximate repeats stretch occupies residues 234-433 (GAYGGGYGGY…YGGQSSMSGY (200 aa)). Tyrosine 246 carries the post-translational modification Phosphotyrosine. Positions 289–364 (HCVHMRGLPY…RYVELFLNST (76 aa)) constitute an RRM 3 domain. A Phosphoserine modification is found at serine 310. 3 repeat units span residues 354 to 372 (HRYV…GGAY), 374 to 392 (HSYV…GGAY), and 418 to 433 (GGYG…MSGY). Residues 354-392 (HRYVELFLNSTAGTSGGAYDHSYVELFLNSTAGASGGAY) form a 2 X 19 AA perfect repeats region.

Component of a ribonucleoprotein complex containing mRNAs and RNA-binding proteins including DDX5, HNRNPH2 and SRSF1 as well as splicing regulator ARVCF. Interacts with TXNL4/DIM1.

Its subcellular location is the nucleus. The protein resides in the nucleoplasm. Its function is as follows. This protein is a component of the heterogeneous nuclear ribonucleoprotein (hnRNP) complexes which provide the substrate for the processing events that pre-mRNAs undergo before becoming functional, translatable mRNAs in the cytoplasm. Binds poly(RG). This Bos taurus (Bovine) protein is Heterogeneous nuclear ribonucleoprotein H2 (HNRNPH2).